Here is a 2210-residue protein sequence, read N- to C-terminus: Mediator of RNA polymerase II transcription subunit 13-like (2210 aa).

Over residues 391–400 the composition is skewed to polar residues; the sequence is SKRSQMSTPT. Disordered regions lie at residues 391 to 414, 435 to 489, and 519 to 582; these read SKRSQMSTPTLEEEPASNPATWDF, AVGP…PFHH, and VSSS…NPAL. Residues 445-458 show a composition bias toward low complexity; the sequence is SQPGFSAGPSSSSS. Positions 468–480 are enriched in basic and acidic residues; sequence KTAERQEKGDKLQ. The segment covering 533–544 has biased composition (polar residues); the sequence is SRNTSKQMNLNP. Over residues 551–560 the composition is skewed to pro residues; sequence PISPLPPTLS. Residues serine 553 and serine 560 each carry the phosphoserine modification. An LXXLL motif 1 motif is present at residues 669 to 673; the sequence is LQRLL. Residues 736–752 show a composition bias toward basic and acidic residues; the sequence is GTEKDSLKKNKSEDGFG. A disordered region spans residues 736-770; the sequence is GTEKDSLKKNKSEDGFGTKDVTTPGHSTPVPDGKN. 3 positions are modified to phosphoserine: serine 817, serine 826, and serine 923. Positions 1016 to 1096 are disordered; it reads PQMNTPVTLN…STTRPLNSVE (81 aa). The segment covering 1025-1036 has biased composition (low complexity); the sequence is NSAAPASNSGAG. Positions 1077 to 1092 are enriched in polar residues; the sequence is TDQGSPASTPSTTRPL. The LXXLL motif 2 motif lies at 1225-1229; sequence LLLLL. The tract at residues 1380 to 1401 is leucine-zipper; it reads LPIPTLLVGYDKDFLTISPFSL. Disordered stretches follow at residues 1530-1656 and 2045-2080; these read QTPP…VTER and GNLHSSPNSSPVPSPGSPSGIGVGSHFQHSRSQGER. Over residues 1531 to 1608 the composition is skewed to low complexity; the sequence is TPPAAAQGQA…ISTTSSSGFS (78 aa). Residues 1615–1629 are compositionally biased toward polar residues; the sequence is NPSTGGISADRTQGN. Positions 1637–1650 are enriched in low complexity; the sequence is DPGQSSSQPSQDGQ. Serine 2083 carries the post-translational modification Phosphoserine.

Belongs to the Mediator complex subunit 13 family. As to quaternary structure, component of the Mediator complex, which is composed of MED1, MED4, MED6, MED7, MED8, MED9, MED10, MED11, MED12, MED13, MED13L, MED14, MED15, MED16, MED17, MED18, MED19, MED20, MED21, MED22, MED23, MED24, MED25, MED26, MED27, MED29, MED30, MED31, CCNC, CDK8 and CDC2L6/CDK11. The MED12, MED13, CCNC and CDK8 subunits form a distinct module termed the CDK8 module. Mediator containing the CDK8 module is less active than Mediator lacking this module in supporting transcriptional activation. Individual preparations of the Mediator complex lacking one or more distinct subunits have been variously termed ARC, CRSP, DRIP, PC2, SMCC and TRAP. In terms of tissue distribution, highly expressed in brain (cerebellum), heart (aorta), skeletal muscle, kidney, placenta and peripheral blood leukocytes. Highly expressed in fetal brain.

It localises to the nucleus. Component of the Mediator complex, a coactivator involved in the regulated transcription of nearly all RNA polymerase II-dependent genes. Mediator functions as a bridge to convey information from gene-specific regulatory proteins to the basal RNA polymerase II transcription machinery. Mediator is recruited to promoters by direct interactions with regulatory proteins and serves as a scaffold for the assembly of a functional preinitiation complex with RNA polymerase II and the general transcription factors. This subunit may specifically regulate transcription of targets of the Wnt signaling pathway and SHH signaling pathway. The chain is Mediator of RNA polymerase II transcription subunit 13-like (MED13L) from Homo sapiens (Human).